Reading from the N-terminus, the 163-residue chain is MHKKYFIGTSILIAVFVVIFDQVTKYIIATTMKIGDSFEVIPHFLNITSHRNNGAAWGILSGKMTFFFIITIIILIALVYFFIKDAQYNLFMQVAISLLFAGALGNFIDRILTGEVVDFIDTNIFGYDFPIFNIADSSLTIGVILIIIALLKDTSNKKEKEVK.

3 consecutive transmembrane segments (helical) span residues 11 to 31 (ILIA…IATT), 63 to 83 (KMTF…YFFI), and 88 to 108 (YNLF…GNFI). Catalysis depends on residues aspartate 118 and aspartate 136. The helical transmembrane segment at 131-151 (IFNIADSSLTIGVILIIIALL) threads the bilayer.

Belongs to the peptidase A8 family.

Its subcellular location is the cell membrane. The catalysed reaction is Release of signal peptides from bacterial membrane prolipoproteins. Hydrolyzes -Xaa-Yaa-Zaa-|-(S,diacylglyceryl)Cys-, in which Xaa is hydrophobic (preferably Leu), and Yaa (Ala or Ser) and Zaa (Gly or Ala) have small, neutral side chains.. Its pathway is protein modification; lipoprotein biosynthesis (signal peptide cleavage). Its function is as follows. This protein specifically catalyzes the removal of signal peptides from prolipoproteins. The chain is Lipoprotein signal peptidase from Staphylococcus aureus (strain Mu3 / ATCC 700698).